Consider the following 294-residue polypeptide: Probable HTH-type transcriptional regulator LrrA (294 aa).

The HTH lysR-type domain occupies 1-58 (MNITQLQILAAVVETGNFSAAALQLDLSQSAVSRAIAALEDELGVVLLSRGRFGARPT). The H-T-H motif DNA-binding region spans 18–37 (FSAAALQLDLSQSAVSRAIA).

Belongs to the LysR transcriptional regulatory family.

The protein is Probable HTH-type transcriptional regulator LrrA (lrrA) of Synechococcus elongatus (strain ATCC 33912 / PCC 7942 / FACHB-805) (Anacystis nidulans R2).